A 471-amino-acid polypeptide reads, in one-letter code: Pneumolysin (471 aa).

4 consecutive transmembrane segments (beta stranded) span residues 158–171, 178–187, 256–265, and 273–285; these read MEQLKVKFGSDFEK, IDFNSVHSGE, SDEVEAAFEA, and APQTEWKQILDNT. Positions 427-437 match the Conserved undecapeptide motif; that stretch reads ECTGLAWEWWR. The Cholesterol binding signature appears at 459 to 460; it reads TL.

The protein belongs to the cholesterol-dependent cytolysin family. Homooligomeric pore complex of 35 to 50 subunits; when inserted in the host membrane. In terms of processing, has a slightly altered apparent molecular weight in a secA2 deletion mutant, but no post-translational modifications have been found.

The protein localises to the secreted. It is found in the cell wall. Its subcellular location is the host cell membrane. Its function is as follows. A cholesterol-dependent toxin that causes cytolysis by forming pores in cholesterol containing host membranes. After binding to target membranes, the protein undergoes a major conformation change, leading to its insertion in the host membrane and formation of an oligomeric pore complex. Cholesterol is required for binding to host membranes, membrane insertion and pore formation; cholesterol binding is mediated by a Thr-Leu pair in the C-terminus. Can be reversibly inactivated by oxidation. This is Pneumolysin (ply) from Streptococcus pneumoniae serotype 4 (strain ATCC BAA-334 / TIGR4).